Consider the following 61-residue polypeptide: Large ribosomal subunit protein bL28A (61 aa).

The protein belongs to the bacterial ribosomal protein bL28 family.

In Streptomyces coelicolor (strain ATCC BAA-471 / A3(2) / M145), this protein is Large ribosomal subunit protein bL28A (rpmB1).